We begin with the raw amino-acid sequence, 475 residues long: Ribonuclease Y (475 aa).

A disordered region spans residues 34-73 (EFERESRERRNELQRVERRLMQKEESLDKKSETLEQKDDR). One can recognise a KH domain in the interval 165-228 (TVTVVQLPND…EVARIALEKL (64 aa)). One can recognise an HD domain in the interval 291–384 (VLKHAIEVSH…VTAADAISAA (94 aa)).

Belongs to the RNase Y family.

Its function is as follows. Endoribonuclease that initiates mRNA decay. The protein is Ribonuclease Y of Alkaliphilus metalliredigens (strain QYMF).